The sequence spans 595 residues: Aspartate--tRNA ligase (595 aa).

An L-aspartate-binding site is contributed by E173. The segment at 197 to 200 (QLFK) is aspartate. R219 is an L-aspartate binding site. Residues 219 to 221 (RDE) and Q228 each bind ATP. H449 is an L-aspartate binding site. E483 is an ATP binding site. Residue R490 participates in L-aspartate binding. 535 to 538 (GLDR) lines the ATP pocket.

The protein belongs to the class-II aminoacyl-tRNA synthetase family. Type 1 subfamily. Homodimer.

The protein resides in the cytoplasm. The catalysed reaction is tRNA(Asp) + L-aspartate + ATP = L-aspartyl-tRNA(Asp) + AMP + diphosphate. Functionally, catalyzes the attachment of L-aspartate to tRNA(Asp) in a two-step reaction: L-aspartate is first activated by ATP to form Asp-AMP and then transferred to the acceptor end of tRNA(Asp). This Shewanella woodyi (strain ATCC 51908 / MS32) protein is Aspartate--tRNA ligase.